The chain runs to 711 residues: Ribosomal RNA large subunit methyltransferase K/L (711 aa).

The THUMP domain maps to 43 to 154; that stretch reads LAYRITLWSR…RGQITLGINF (112 aa).

It belongs to the methyltransferase superfamily. RlmKL family.

The protein resides in the cytoplasm. The enzyme catalyses guanosine(2445) in 23S rRNA + S-adenosyl-L-methionine = N(2)-methylguanosine(2445) in 23S rRNA + S-adenosyl-L-homocysteine + H(+). The catalysed reaction is guanosine(2069) in 23S rRNA + S-adenosyl-L-methionine = N(2)-methylguanosine(2069) in 23S rRNA + S-adenosyl-L-homocysteine + H(+). Its function is as follows. Specifically methylates the guanine in position 2445 (m2G2445) and the guanine in position 2069 (m7G2069) of 23S rRNA. The protein is Ribosomal RNA large subunit methyltransferase K/L of Shewanella loihica (strain ATCC BAA-1088 / PV-4).